A 278-amino-acid chain; its full sequence is MDYILIGVILGIVQGISEWIPISSKTQVLIVSSSLLGLSFSVAYSFGLFMEIGTIAAAIIYFRREISGLLKALVRMSSRREDYLLLKFLVIVTIITGLMGVPLYLFVISLPILGLPMTVLGVVLLTDGIIIYLSRKNYISRKGLHDLRLRDIIIVGIAQGLAALPGVSRSGITTSALILLGVKPEEAFKLSFISLIPAALGAIGVTVLFSKHEVSQAVHSVSLSGLLISIVVATFVSIFFINALLRFARTNKVVVLVIILGIIAIISGILSGIAKGFY.

A run of 8 helical transmembrane segments spans residues 3–23, 42–62, 88–108, 112–132, 152–172, 190–210, 225–245, and 253–273; these read YILI…IPIS, VAYS…IIYF, FLVI…LFVI, ILGL…IIIY, IIIV…RSGI, LSFI…VLFS, GLLI…NALL, and VVVL…LSGI.

This sequence belongs to the UppP family.

It localises to the cell membrane. It carries out the reaction di-trans,octa-cis-undecaprenyl diphosphate + H2O = di-trans,octa-cis-undecaprenyl phosphate + phosphate + H(+). Its function is as follows. Catalyzes the dephosphorylation of undecaprenyl diphosphate (UPP). The chain is Undecaprenyl-diphosphatase from Saccharolobus islandicus (strain M.14.25 / Kamchatka #1) (Sulfolobus islandicus).